The primary structure comprises 156 residues: 6,7-dimethyl-8-ribityllumazine synthase (156 aa).

5-amino-6-(D-ribitylamino)uracil contacts are provided by residues phenylalanine 22, 57 to 59 (AYE), and 81 to 83 (SVI). Residue 86-87 (GT) coordinates (2S)-2-hydroxy-3-oxobutyl phosphate. Histidine 89 (proton donor) is an active-site residue. Phenylalanine 114 contacts 5-amino-6-(D-ribitylamino)uracil. Arginine 128 contributes to the (2S)-2-hydroxy-3-oxobutyl phosphate binding site.

It belongs to the DMRL synthase family. As to quaternary structure, forms an icosahedral capsid composed of 60 subunits, arranged as a dodecamer of pentamers.

The catalysed reaction is (2S)-2-hydroxy-3-oxobutyl phosphate + 5-amino-6-(D-ribitylamino)uracil = 6,7-dimethyl-8-(1-D-ribityl)lumazine + phosphate + 2 H2O + H(+). The protein operates within cofactor biosynthesis; riboflavin biosynthesis; riboflavin from 2-hydroxy-3-oxobutyl phosphate and 5-amino-6-(D-ribitylamino)uracil: step 1/2. Functionally, catalyzes the formation of 6,7-dimethyl-8-ribityllumazine by condensation of 5-amino-6-(D-ribitylamino)uracil with 3,4-dihydroxy-2-butanone 4-phosphate. This is the penultimate step in the biosynthesis of riboflavin. In Photobacterium profundum (strain SS9), this protein is 6,7-dimethyl-8-ribityllumazine synthase.